A 337-amino-acid chain; its full sequence is Biotin synthase (337 aa).

The Radical SAM core domain occupies 62–289; the sequence is NAVQLSTLIS…KAMVRLSAGR (228 aa). [4Fe-4S] cluster contacts are provided by Cys-77, Cys-81, and Cys-84. Cys-121, Cys-152, Cys-212, and Arg-284 together coordinate [2Fe-2S] cluster.

The protein belongs to the radical SAM superfamily. Biotin synthase family. As to quaternary structure, homodimer. [4Fe-4S] cluster is required as a cofactor. [2Fe-2S] cluster serves as cofactor.

The catalysed reaction is (4R,5S)-dethiobiotin + (sulfur carrier)-SH + 2 reduced [2Fe-2S]-[ferredoxin] + 2 S-adenosyl-L-methionine = (sulfur carrier)-H + biotin + 2 5'-deoxyadenosine + 2 L-methionine + 2 oxidized [2Fe-2S]-[ferredoxin]. Its pathway is cofactor biosynthesis; biotin biosynthesis; biotin from 7,8-diaminononanoate: step 2/2. Its function is as follows. Catalyzes the conversion of dethiobiotin (DTB) to biotin by the insertion of a sulfur atom into dethiobiotin via a radical-based mechanism. The chain is Biotin synthase from Nitrosomonas europaea (strain ATCC 19718 / CIP 103999 / KCTC 2705 / NBRC 14298).